Reading from the N-terminus, the 350-residue chain is Protein pelota homolog (350 aa).

The protein belongs to the eukaryotic release factor 1 family. Pelota subfamily. Monomer. A divalent metal cation serves as cofactor.

The protein resides in the cytoplasm. In terms of biological role, may function in recognizing stalled ribosomes, interact with stem-loop structures in stalled mRNA molecules, and effect endonucleolytic cleavage of the mRNA. May play a role in the release non-functional ribosomes and degradation of damaged mRNAs. Has endoribonuclease activity. This chain is Protein pelota homolog, found in Methanosarcina mazei (strain ATCC BAA-159 / DSM 3647 / Goe1 / Go1 / JCM 11833 / OCM 88) (Methanosarcina frisia).